The chain runs to 223 residues: MRGLFVTGTDTGVGKTEVACALVRAARAAGLDAVGMKPAQSGHVPGEPSDAERLREASDRVEPLEAICPYTFGAPLAPAAAARLEGREVSLARVVEAARALAARHAAVVVEGAGGLLVPLTARETHADLAAALGLPVLVVARAGLGTVNHTALTVEALERRGLAVAGIVLNRTGPEDDPSVPLNAAEIARLTYREPLALLPWEPDIARRARSLGSILGAKIQF.

Thr16 is a binding site for Mg(2+). Lys37 is an active-site residue. Ser41 lines the substrate pocket. Residues Asp50 and Glu111 each coordinate Mg(2+). ATP contacts are provided by residues Asp50, 111 to 114, and 171 to 172; these read EGAG and NR.

It belongs to the dethiobiotin synthetase family. As to quaternary structure, homodimer. Requires Mg(2+) as cofactor.

The protein localises to the cytoplasm. It carries out the reaction (7R,8S)-7,8-diammoniononanoate + CO2 + ATP = (4R,5S)-dethiobiotin + ADP + phosphate + 3 H(+). It functions in the pathway cofactor biosynthesis; biotin biosynthesis; biotin from 7,8-diaminononanoate: step 1/2. In terms of biological role, catalyzes a mechanistically unusual reaction, the ATP-dependent insertion of CO2 between the N7 and N8 nitrogen atoms of 7,8-diaminopelargonic acid (DAPA, also called 7,8-diammoniononanoate) to form a ureido ring. This is ATP-dependent dethiobiotin synthetase BioD from Anaeromyxobacter dehalogenans (strain 2CP-1 / ATCC BAA-258).